Reading from the N-terminus, the 398-residue chain is S-adenosylmethionine synthase (398 aa).

Position 16 (histidine 16) interacts with ATP. A Mg(2+)-binding site is contributed by aspartate 18. Glutamate 44 contacts K(+). Residues glutamate 57 and glutamine 100 each contribute to the L-methionine site. The interval 100–110 (QSPDIAQGVNE) is flexible loop. ATP contacts are provided by residues 175–177 (DAK), 242–243 (RF), aspartate 251, 257–258 (RK), alanine 274, and lysine 278. Aspartate 251 contributes to the L-methionine binding site. An L-methionine-binding site is contributed by lysine 282.

This sequence belongs to the AdoMet synthase family. Homotetramer; dimer of dimers. The cofactor is Mg(2+). Requires K(+) as cofactor.

Its subcellular location is the cytoplasm. It catalyses the reaction L-methionine + ATP + H2O = S-adenosyl-L-methionine + phosphate + diphosphate. The protein operates within amino-acid biosynthesis; S-adenosyl-L-methionine biosynthesis; S-adenosyl-L-methionine from L-methionine: step 1/1. Its function is as follows. Catalyzes the formation of S-adenosylmethionine (AdoMet) from methionine and ATP. The overall synthetic reaction is composed of two sequential steps, AdoMet formation and the subsequent tripolyphosphate hydrolysis which occurs prior to release of AdoMet from the enzyme. The protein is S-adenosylmethionine synthase of Streptococcus agalactiae serotype Ia (strain ATCC 27591 / A909 / CDC SS700).